Reading from the N-terminus, the 195-residue chain is Heavy metal-associated isoprenylated plant protein 18 (195 aa).

2 disordered regions span residues 36-76 and 145-172; these read DVVQ…KPET and EKEK…NPSS. Composition is skewed to basic and acidic residues over residues 47–76 and 145–157; these read TVTK…KPET and EKEK…ITKD. In terms of domain architecture, HMA spans 78–149; it reads TRKLEIHIAF…RIVKMEKEKK (72 aa). Cysteine 192 bears the Cysteine methyl ester mark. The S-farnesyl cysteine moiety is linked to residue cysteine 192. Positions 193–195 are cleaved as a propeptide — removed in mature form; the sequence is SIS.

It belongs to the HIPP family.

Its function is as follows. Probable heavy-metal-binding protein. Required for female gametophyte development and function. The polypeptide is Heavy metal-associated isoprenylated plant protein 18 (Arabidopsis thaliana (Mouse-ear cress)).